Reading from the N-terminus, the 1173-residue chain is RNA polymerase-associated protein CTR9 homolog (1173 aa).

16 TPR repeats span residues 41 to 75 (LHIW…NLDY), 129 to 162 (NHLL…SPNN), 163 to 196 (IPAL…NPGC), 198 to 231 (AEVR…NSKC), 235 to 268 (LVGL…DPSN), 306 to 339 (AESC…ASSS), 341 to 374 (VLPF…YPNN), 412 to 444 (VEAW…LQEK), 451 to 484 (PEIL…AKAE), 497 to 530 (VTTS…HPNY), 531 to 564 (VDCY…NQDH), 566 to 598 (DAWS…PATQ), 613 to 646 (QTLH…DAKN), 647 to 680 (LYAA…TADI), 681 to 714 (SDVW…FYKH), and 717 to 750 (TEVV…APSD). The interval 892-1173 (TGETEATKEK…GSEHGSDDSD (282 aa)) is disordered. Over residues 900–912 (EKKRGGGGGRRSK) the composition is skewed to basic residues. A compositionally biased stretch (acidic residues) spans 917–929 (FDEFVNDDTDDDL). A Phosphothreonine modification is found at Thr925. Residues Ser932, Ser941, Ser943, and Ser970 each carry the phosphoserine modification. A compositionally biased stretch (basic residues) spans 980-994 (KPKKRRPPRAEKKKA). Phosphoserine occurs at positions 1020 and 1021. Over residues 1023 to 1034 (EDKLKIADEGHP) the composition is skewed to basic and acidic residues. Residues Ser1037, Ser1039, Ser1041, Ser1079, Ser1083, Ser1085, Ser1095, and Ser1100 each carry the phosphoserine modification. Positions 1097–1128 (SEQSDNESVQSGRSPSGASENENDSRPASPSA) are enriched in polar residues. Positions 1137–1159 (GSDNEGSGQGSGNESEPEGSNNE) are enriched in low complexity. Basic and acidic residues predominate over residues 1160–1173 (ASDRGSEHGSDDSD).

Component of the PAF1 complex, which consists of CDC73, PAF1, LEO1, CTR9, RTF1 and SKIC8. The PAF1 complex interacts with PHF5A. Interacts with KMT2A/MLL1. Interacts with STAT3. Interacts with SETD5. Interacts with ERCC6. In terms of tissue distribution, widely expressed.

It localises to the nucleus speckle. Component of the PAF1 complex (PAF1C) which has multiple functions during transcription by RNA polymerase II and is implicated in regulation of development and maintenance of embryonic stem cell pluripotency. PAF1C associates with RNA polymerase II through interaction with POLR2A CTD non-phosphorylated and 'Ser-2'- and 'Ser-5'-phosphorylated forms and is involved in transcriptional elongation, acting both independently and synergistically with TCEA1 and in cooperation with the DSIF complex and HTATSF1. PAF1C is required for transcription of Hox and Wnt target genes. PAF1C is involved in hematopoiesis and stimulates transcriptional activity of KMT2A/MLL1. PAF1C is involved in histone modifications such as ubiquitination of histone H2B and methylation on histone H3 'Lys-4' (H3K4me3). PAF1C recruits the RNF20/40 E3 ubiquitin-protein ligase complex and the E2 enzyme UBE2A or UBE2B to chromatin which mediate monoubiquitination of 'Lys-120' of histone H2B (H2BK120ub1); UB2A/B-mediated H2B ubiquitination is proposed to be coupled to transcription. PAF1C is involved in mRNA 3' end formation probably through association with cleavage and poly(A) factors. Required for mono- and trimethylation on histone H3 'Lys-4' (H3K4me3) and dimethylation on histone H3 'Lys-79' (H3K4me3). Required for Hox gene transcription. Required for the trimethylation of histone H3 'Lys-4' (H3K4me3) on genes involved in stem cell pluripotency; this function is synergistic with CXXC1 indicative for an involvement of the SET1 complex. Involved in transcriptional regulation of IL6-responsive genes and in JAK-STAT pathway; may regulate DNA-association of STAT3. The sequence is that of RNA polymerase-associated protein CTR9 homolog (Ctr9) from Mus musculus (Mouse).